Reading from the N-terminus, the 429-residue chain is Glutamate-1-semialdehyde 2,1-aminomutase (429 aa).

Lys267 is subject to N6-(pyridoxal phosphate)lysine.

It belongs to the class-III pyridoxal-phosphate-dependent aminotransferase family. HemL subfamily. As to quaternary structure, homodimer. The cofactor is pyridoxal 5'-phosphate.

It is found in the cytoplasm. It carries out the reaction (S)-4-amino-5-oxopentanoate = 5-aminolevulinate. It functions in the pathway porphyrin-containing compound metabolism; protoporphyrin-IX biosynthesis; 5-aminolevulinate from L-glutamyl-tRNA(Glu): step 2/2. The chain is Glutamate-1-semialdehyde 2,1-aminomutase from Xanthomonas campestris pv. campestris (strain 8004).